A 129-amino-acid polypeptide reads, in one-letter code: Small ribosomal subunit protein uS11 (129 aa).

The protein belongs to the universal ribosomal protein uS11 family. Part of the 30S ribosomal subunit. Interacts with proteins S7 and S18. Binds to IF-3.

Its function is as follows. Located on the platform of the 30S subunit, it bridges several disparate RNA helices of the 16S rRNA. Forms part of the Shine-Dalgarno cleft in the 70S ribosome. The chain is Small ribosomal subunit protein uS11 from Lawsonia intracellularis (strain PHE/MN1-00).